Reading from the N-terminus, the 2303-residue chain is Adenomatous polyposis coli protein 2 (2303 aa).

Positions 8 to 59 (YEQLVRQVEALKAENSHLRQELRDNSSHLSKLETETSGMKEVLKHLQGKLEQ) form a coiled coil. Disordered regions lie at residues 94 to 120 (PTLG…KDSF) and 247 to 270 (VPVD…QPGN). ARM repeat units follow at residues 302 to 341 (PESC…PGAK), 479 to 518 (ANKA…NLSW), 522 to 562 (INSK…NLSA), 566 to 609 (ENKA…NVSS), 615 to 654 (EDYR…NLSA), and 657 to 696 (ARDQ…NLLA). Disordered regions lie at residues 744–764 (KQGP…LRHL) and 816–835 (LART…DTSG). Residues 825-834 (GGKEAEKDTS) are compositionally biased toward basic and acidic residues. Positions 840 to 864 (AAKAKAKLALAVARIDQLVEDISAL) form a coiled coil. 4 disordered regions span residues 867-908 (SSDD…AGSR), 953-986 (RRED…ATSA), 1069-1152 (RCSS…ENYV), and 1173-1228 (SPSI…EATQ). Residues 869–878 (DDSFSLSSGD) are compositionally biased toward low complexity. The stretch at 1058-1077 (LAAQEGPLSLSRCSSLSSLS) is repeat 1. The tract at residues 1058–1587 (LAAQEGPLSL…SLSSSASSLS (530 aa)) is 5 X 20 AA approximate repeat of F-X-V-E-X-T-P-X-C-F-S-R-X-S-S-L-S-S-L-S. An interaction with CTNNB1 region spans residues 1058–1587 (LAAQEGPLSL…SLSSSASSLS (530 aa)). A compositionally biased stretch (low complexity) spans 1069–1084 (RCSSLSSLSSAGRPGP). Residues 1088-1101 (GDLDDSDSSLEGLE) show a composition bias toward acidic residues. The span at 1143–1152 (TPSSSSENYV) shows a compositional bias: polar residues. Copy 2 of the repeat occupies 1150 to 1169 (NYVQETPLVLSRCSSVSSLG). Positions 1173–1186 (SPSIASSIPSEPCS) are enriched in low complexity. A compositionally biased stretch (polar residues) spans 1202–1212 (PGQTMPPSRSK). The stretch at 1263-1282 (FTVEKPDENFSCASSLSALA) is repeat 3. Disordered regions lie at residues 1307–1335 (GAGG…PRGA), 1382–1497 (PAQE…QSLC), 1510–1684 (YGND…LDSV), 1724–2031 (LSVG…RGRP), and 2046–2232 (LRAA…DVDG). Over residues 1390-1410 (TDSAEGTPVNFSSAASLSDET) the composition is skewed to polar residues. The stretch at 1391 to 1410 (DSAEGTPVNFSSAASLSDET) is repeat 4. 2 stretches are compositionally biased toward basic and acidic residues: residues 1477–1489 (ADKD…RTRG) and 1537–1548 (FTRERPQGRKEA). Copy 5 of the repeat occupies 1568–1587 (LIADETPPCYSLSSSASSLS). Residues 1578-1589 (SLSSSASSLSEP) show a composition bias toward low complexity. Phosphoserine occurs at positions 1585 and 1587. Basic residues predominate over residues 1638–1654 (PRRRPPVSGLRRRKPRA). Composition is skewed to basic and acidic residues over residues 1655 to 1671 (TRLD…RGEE) and 1739 to 1755 (RQAE…EKRG). Over residues 1819–1830 (APPCLAQPAAPA) the composition is skewed to low complexity. Residues 1821–1900 (PCLAQPAAPA…PPVTQAAGAL (80 aa)) form a required for localization to microtubules and function in microtubule stabilization region. Over residues 1851–1860 (ELATLSQPPR) the composition is skewed to polar residues. Low complexity-rich tracts occupy residues 1868–1886 (LAKT…SQPL), 1971–1984 (GLVR…SGSE), 2011–2026 (LSSA…GASP), 2049–2062 (APRQ…QRPP), and 2113–2123 (GAVPAAPASAD). The tract at residues 2067–2144 (SPGERPARRT…PLPRVAAPGT (78 aa)) is interaction with MAPRE1 and MAPRE3. Residues 2124–2135 (AARRSSDGEPRP) are compositionally biased toward basic and acidic residues. The segment covering 2200–2209 (KTNSSTSPSL) has biased composition (polar residues).

This sequence belongs to the adenomatous polyposis coli (APC) family. Interacts with PSRC1. Interacts with APC. Interacts with CTNNB1. Interacts with MAPRE1 and MAPRE3. Interacts with TP53BP. Interacts possibly with AXIN2. As to expression, widely expressed (at protein level). Specifically expressed in the CNS.

It is found in the cytoplasm. Its subcellular location is the cytoskeleton. It localises to the golgi apparatus. The protein resides in the perinuclear region. In terms of biological role, stabilizes microtubules and may regulate actin fiber dynamics through the activation of Rho family GTPases. May also function in Wnt signaling by promoting the rapid degradation of CTNNB1. This Homo sapiens (Human) protein is Adenomatous polyposis coli protein 2.